The sequence spans 289 residues: Homoserine kinase (289 aa).

79–89 (PLARGLGSSSS) contributes to the ATP binding site.

Belongs to the GHMP kinase family. Homoserine kinase subfamily.

It localises to the cytoplasm. The enzyme catalyses L-homoserine + ATP = O-phospho-L-homoserine + ADP + H(+). Its pathway is amino-acid biosynthesis; L-threonine biosynthesis; L-threonine from L-aspartate: step 4/5. Its function is as follows. Catalyzes the ATP-dependent phosphorylation of L-homoserine to L-homoserine phosphate. This Streptococcus pneumoniae (strain Taiwan19F-14) protein is Homoserine kinase.